A 504-amino-acid polypeptide reads, in one-letter code: Ribose import ATP-binding protein RbsA (504 aa).

ABC transporter domains lie at Leu6–Arg242 and Val252–Thr495. Gly38 to Ser45 is an ATP binding site.

This sequence belongs to the ABC transporter superfamily. Ribose importer (TC 3.A.1.2.1) family. In terms of assembly, the complex is composed of an ATP-binding protein (RbsA), two transmembrane proteins (RbsC) and a solute-binding protein (RbsB).

The protein resides in the cell inner membrane. The enzyme catalyses D-ribose(out) + ATP + H2O = D-ribose(in) + ADP + phosphate + H(+). Its function is as follows. Part of the ABC transporter complex RbsABC involved in ribose import. Responsible for energy coupling to the transport system. The protein is Ribose import ATP-binding protein RbsA of Photobacterium profundum (strain SS9).